Consider the following 32-residue polypeptide: Tail virion protein G9P (32 aa).

A helical membrane pass occupies residues 8-24; sequence FASFVLGWCLRSGITYF.

Belongs to the inovirus G9P protein family.

It is found in the virion. It localises to the host membrane. May initiate with G7P the virion concomitant assembly-budding process, by interacting with the packaging signal of the viral genome. The assembly-budding takes place at the host inner membrane. In turn, G7P and G9P are present at the end of the filamentous virion that emerges first from the bacterial host. In Escherichia coli (Bacteriophage f1), this protein is Tail virion protein G9P (IX).